Consider the following 299-residue polypeptide: GTPase Era (299 aa).

The region spanning Lys-4–Glu-171 is the Era-type G domain. Positions Gly-12–Ser-19 are G1. Gly-12 to Ser-19 is a GTP binding site. The segment at Xaa-38 to Asn-42 is G2. Positions Asp-59–Gly-62 are G3. GTP is bound by residues Asp-59 to Ile-63 and Asn-121 to Asp-124. A G4 region spans residues Asn-121–Asp-124. The interval Ile-150–Ala-152 is G5. The 79-residue stretch at Thr-202 to Lys-280 folds into the KH type-2 domain.

Belongs to the TRAFAC class TrmE-Era-EngA-EngB-Septin-like GTPase superfamily. Era GTPase family. As to quaternary structure, monomer.

It localises to the cytoplasm. Its subcellular location is the cell membrane. In terms of biological role, an essential GTPase that binds both GDP and GTP, with rapid nucleotide exchange. Plays a role in 16S rRNA processing and 30S ribosomal subunit biogenesis and possibly also in cell cycle regulation and energy metabolism. The polypeptide is GTPase Era (Streptococcus pneumoniae serotype 19F (strain G54)).